The sequence spans 251 residues: Ubiquinone/menaquinone biosynthesis C-methyltransferase UbiE (251 aa).

S-adenosyl-L-methionine contacts are provided by residues threonine 74, aspartate 95, 123–124 (NA), and serine 140.

This sequence belongs to the class I-like SAM-binding methyltransferase superfamily. MenG/UbiE family.

It catalyses the reaction a 2-demethylmenaquinol + S-adenosyl-L-methionine = a menaquinol + S-adenosyl-L-homocysteine + H(+). The enzyme catalyses a 2-methoxy-6-(all-trans-polyprenyl)benzene-1,4-diol + S-adenosyl-L-methionine = a 5-methoxy-2-methyl-3-(all-trans-polyprenyl)benzene-1,4-diol + S-adenosyl-L-homocysteine + H(+). It participates in quinol/quinone metabolism; menaquinone biosynthesis; menaquinol from 1,4-dihydroxy-2-naphthoate: step 2/2. Its pathway is cofactor biosynthesis; ubiquinone biosynthesis. Functionally, methyltransferase required for the conversion of demethylmenaquinol (DMKH2) to menaquinol (MKH2) and the conversion of 2-polyprenyl-6-methoxy-1,4-benzoquinol (DDMQH2) to 2-polyprenyl-3-methyl-6-methoxy-1,4-benzoquinol (DMQH2). This chain is Ubiquinone/menaquinone biosynthesis C-methyltransferase UbiE, found in Escherichia coli O1:K1 / APEC.